Here is a 328-residue protein sequence, read N- to C-terminus: Glycerol-3-phosphate dehydrogenase [NAD(P)+] (328 aa).

Residues W11, R30, and K103 each contribute to the NADPH site. The sn-glycerol 3-phosphate site is built by K103, G132, and S134. Residue A136 coordinates NADPH. The sn-glycerol 3-phosphate site is built by K187, D240, S250, R251, and N252. K187 (proton acceptor) is an active-site residue. R251 lines the NADPH pocket. Residues V275 and E277 each contribute to the NADPH site.

This sequence belongs to the NAD-dependent glycerol-3-phosphate dehydrogenase family.

Its subcellular location is the cytoplasm. The catalysed reaction is sn-glycerol 3-phosphate + NAD(+) = dihydroxyacetone phosphate + NADH + H(+). It catalyses the reaction sn-glycerol 3-phosphate + NADP(+) = dihydroxyacetone phosphate + NADPH + H(+). It functions in the pathway membrane lipid metabolism; glycerophospholipid metabolism. Its function is as follows. Catalyzes the reduction of the glycolytic intermediate dihydroxyacetone phosphate (DHAP) to sn-glycerol 3-phosphate (G3P), the key precursor for phospholipid synthesis. The sequence is that of Glycerol-3-phosphate dehydrogenase [NAD(P)+] from Aromatoleum aromaticum (strain DSM 19018 / LMG 30748 / EbN1) (Azoarcus sp. (strain EbN1)).